Consider the following 448-residue polypeptide: Probable glycine dehydrogenase (decarboxylating) subunit 1 (448 aa).

This sequence belongs to the GcvP family. N-terminal subunit subfamily. As to quaternary structure, the glycine cleavage system is composed of four proteins: P, T, L and H. In this organism, the P 'protein' is a heterodimer of two subunits.

The catalysed reaction is N(6)-[(R)-lipoyl]-L-lysyl-[glycine-cleavage complex H protein] + glycine + H(+) = N(6)-[(R)-S(8)-aminomethyldihydrolipoyl]-L-lysyl-[glycine-cleavage complex H protein] + CO2. In terms of biological role, the glycine cleavage system catalyzes the degradation of glycine. The P protein binds the alpha-amino group of glycine through its pyridoxal phosphate cofactor; CO(2) is released and the remaining methylamine moiety is then transferred to the lipoamide cofactor of the H protein. The chain is Probable glycine dehydrogenase (decarboxylating) subunit 1 from Staphylococcus aureus (strain Mu3 / ATCC 700698).